We begin with the raw amino-acid sequence, 379 residues long: Acyl-CoA dehydrogenase (379 aa).

It belongs to the acyl-CoA dehydrogenase family. The cofactor is FAD.

It catalyses the reaction a 2,3-saturated acyl-CoA + A = a 2,3-dehydroacyl-CoA + AH2. The chain is Acyl-CoA dehydrogenase (mmgC) from Bacillus subtilis (strain 168).